The following is a 341-amino-acid chain: tRNA N6-adenosine threonylcarbamoyltransferase (341 aa).

The Fe cation site is built by His114 and His118. Residues 136–140 (LVSGG), Asp169, Gly182, Asp186, and Asn278 each bind substrate. Asp304 lines the Fe cation pocket.

Belongs to the KAE1 / TsaD family. It depends on Fe(2+) as a cofactor.

The protein localises to the cytoplasm. It catalyses the reaction L-threonylcarbamoyladenylate + adenosine(37) in tRNA = N(6)-L-threonylcarbamoyladenosine(37) in tRNA + AMP + H(+). In terms of biological role, required for the formation of a threonylcarbamoyl group on adenosine at position 37 (t(6)A37) in tRNAs that read codons beginning with adenine. Is involved in the transfer of the threonylcarbamoyl moiety of threonylcarbamoyl-AMP (TC-AMP) to the N6 group of A37, together with TsaE and TsaB. TsaD likely plays a direct catalytic role in this reaction. The polypeptide is tRNA N6-adenosine threonylcarbamoyltransferase (Lactococcus lactis subsp. cremoris (strain SK11)).